Reading from the N-terminus, the 152-residue chain is Transcriptional regulator MraZ (152 aa).

SpoVT-AbrB domains lie at 7–54 (INSI…TMDE) and 83–126 (ASEM…SQEA).

It belongs to the MraZ family. Forms oligomers.

The protein resides in the cytoplasm. It localises to the nucleoid. This chain is Transcriptional regulator MraZ, found in Hydrogenovibrio crunogenus (strain DSM 25203 / XCL-2) (Thiomicrospira crunogena).